The following is a 100-amino-acid chain: Urease subunit gamma (100 aa).

Belongs to the urease gamma subunit family. As to quaternary structure, heterotrimer of UreA (gamma), UreB (beta) and UreC (alpha) subunits. Three heterotrimers associate to form the active enzyme.

Its subcellular location is the cytoplasm. It carries out the reaction urea + 2 H2O + H(+) = hydrogencarbonate + 2 NH4(+). It functions in the pathway nitrogen metabolism; urea degradation; CO(2) and NH(3) from urea (urease route): step 1/1. The polypeptide is Urease subunit gamma (Mycolicibacterium smegmatis (strain ATCC 700084 / mc(2)155) (Mycobacterium smegmatis)).